A 197-amino-acid polypeptide reads, in one-letter code: MDFQSRILGHFNASIDAKTYASEVLPPFIEVASQMMVQCLVSEGKILACGNGGSAGDSQHFSSELLNRFERERPSLPALALTTDTSTLTSIANDYSYNEIFSKQIRALGQPGDILLAISTSGNSANVVQAIQAAHDRDMHIVALTGRDGGDMASLLGQDDCEIRVPSTSTARIQEVHLLAIHCLCDLIDQQLFGSTE.

The 162-residue stretch at 36-197 (MVQCLVSEGK…IDQQLFGSTE (162 aa)) folds into the SIS domain. Residue 51 to 53 (NGG) participates in substrate binding. His60 and Glu64 together coordinate Zn(2+). Substrate contacts are provided by residues Glu64, 93–94 (ND), 119–121 (STS), Ser124, and Gln174. Gln174 and His182 together coordinate Zn(2+).

It belongs to the SIS family. GmhA subfamily. As to quaternary structure, homotetramer. The cofactor is Zn(2+).

It is found in the cytoplasm. The catalysed reaction is 2 D-sedoheptulose 7-phosphate = D-glycero-alpha-D-manno-heptose 7-phosphate + D-glycero-beta-D-manno-heptose 7-phosphate. The protein operates within carbohydrate biosynthesis; D-glycero-D-manno-heptose 7-phosphate biosynthesis; D-glycero-alpha-D-manno-heptose 7-phosphate and D-glycero-beta-D-manno-heptose 7-phosphate from sedoheptulose 7-phosphate: step 1/1. Its function is as follows. Catalyzes the isomerization of sedoheptulose 7-phosphate in D-glycero-D-manno-heptose 7-phosphate. This Chromohalobacter salexigens (strain ATCC BAA-138 / DSM 3043 / CIP 106854 / NCIMB 13768 / 1H11) protein is Phosphoheptose isomerase.